A 214-amino-acid polypeptide reads, in one-letter code: Adenylate kinase (214 aa).

10 to 15 lines the ATP pocket; that stretch reads GAGKGT. The tract at residues 30 to 59 is NMP; that stretch reads STGDMLRAAVKAGTELGKQAKEIMDAGKLV. AMP-binding positions include threonine 31, arginine 36, 57–59, 85–88, and glutamine 92; these read KLV and GFPR. The tract at residues 122-159 is LID; the sequence is GRRVHAASGRVYHVKFNPPKVEDKDDVTGEDLSVRKDD. ATP is bound by residues arginine 123 and 132–133; that span reads VY. Residues arginine 156 and arginine 167 each coordinate AMP. Arginine 200 contacts ATP.

Belongs to the adenylate kinase family. In terms of assembly, monomer.

The protein localises to the cytoplasm. The enzyme catalyses AMP + ATP = 2 ADP. Its pathway is purine metabolism; AMP biosynthesis via salvage pathway; AMP from ADP: step 1/1. Catalyzes the reversible transfer of the terminal phosphate group between ATP and AMP. Plays an important role in cellular energy homeostasis and in adenine nucleotide metabolism. This is Adenylate kinase from Pectobacterium atrosepticum (strain SCRI 1043 / ATCC BAA-672) (Erwinia carotovora subsp. atroseptica).